Here is a 726-residue protein sequence, read N- to C-terminus: MSTSDDIHNTTATGKCPFHQGGHDQSAGAGTTTRDWWPNQLRVDLLNQHSNRSNPLGEDFDYRKEFSKLDYYGLKKDLKALLTESQPWWPADWGSYAGLFIRMAWHGAGTYRSIDGRGGAGRGQQRFAPLNSWPDNVSLDKARRLLWPIKQKYGQKISWADLFILAGNVALENSGFRTFGFGAGREDVWEPDLDVNWGDEKAWLTHRHPEALAKAPLGATEMGLIYVNPEGPDHSGEPLSAAAAIRATFGNMGMNDEETVALIAGGHTLGKTHGAGPTSNVGPDPEAAPIEEQGLGWASTYGSGVGADAITSGLEVVWTQTPTQWSNYFFENLFKYEWVQTRSPAGAIQFEAVDAPEIIPDPFDPSKKRKPTMLVTDLTLRFDPEFEKISRRFLNDPQAFNEAFARAWFKLTHRDMGPKSRYIGPEVPKEDLIWQDPLPQPIYNPTEQDIIDLKFAIADSGLSVSELVSVAWASASTFRGGDKRGGANGARLALMPQRDWDVNAAAVRALPVLEKIQKESGKASLADIIVLAGVVGVEKAASAAGLSIHVPFAPGRVDARQDQTDIEMFELLEPIADGFRNYRARLDVSTTESLLIDKAQQLTLTAPEMTALVGGMRVLGANFDGSKNGVFTDRVGVLSNDFFVNLLDMRYEWKATDESKELFEGRDRETGEVKYTASRADLVFGSNSVLRAVAEVYASSDAHEKFVKDFVAAWVKVMNLDRFDLL.

Positions 1 to 33 (MSTSDDIHNTTATGKCPFHQGGHDQSAGAGTTT) are disordered. The segment at residues 105 to 226 (WHGAGTYRSI…LGATEMGLIY (122 aa)) is a cross-link (tryptophyl-tyrosyl-methioninium (Trp-Tyr) (with M-252)). The active-site Proton acceptor is the His-106. The segment at residues 226–252 (YVNPEGPDHSGEPLSAAAAIRATFGNM) is a cross-link (tryptophyl-tyrosyl-methioninium (Tyr-Met) (with W-105)). His-267 is a binding site for heme b.

Belongs to the peroxidase family. Peroxidase/catalase subfamily. In terms of assembly, homodimer or homotetramer. It depends on heme b as a cofactor. Formation of the three residue Trp-Tyr-Met cross-link is important for the catalase, but not the peroxidase activity of the enzyme.

The catalysed reaction is H2O2 + AH2 = A + 2 H2O. It carries out the reaction 2 H2O2 = O2 + 2 H2O. Functionally, bifunctional enzyme with both catalase and broad-spectrum peroxidase activity. In Escherichia coli O157:H7, this protein is Catalase-peroxidase 1.